Consider the following 669-residue polypeptide: Methionine--tRNA ligase (669 aa).

The 'HIGH' region motif lies at 14-24 (YYPSGKLHIGN). Residue histidine 161 participates in Zn(2+) binding. The 'KMSKS' region motif lies at 309 to 313 (KMSKS). Lysine 312 contributes to the ATP binding site. Positions 566 to 669 (DFDKVELKVA…KEMPNGAGIA (104 aa)) constitute a tRNA-binding domain.

The protein belongs to the class-I aminoacyl-tRNA synthetase family. MetG type 2B subfamily. In terms of assembly, homodimer.

The protein resides in the cytoplasm. It carries out the reaction tRNA(Met) + L-methionine + ATP = L-methionyl-tRNA(Met) + AMP + diphosphate. Its function is as follows. Is required not only for elongation of protein synthesis but also for the initiation of all mRNA translation through initiator tRNA(fMet) aminoacylation. The polypeptide is Methionine--tRNA ligase (Enterococcus faecalis (strain ATCC 700802 / V583)).